The chain runs to 198 residues: Probable chemoreceptor glutamine deamidase CheD (198 aa).

It belongs to the CheD family.

The catalysed reaction is L-glutaminyl-[protein] + H2O = L-glutamyl-[protein] + NH4(+). In terms of biological role, probably deamidates glutamine residues to glutamate on methyl-accepting chemotaxis receptors (MCPs), playing an important role in chemotaxis. This Xanthomonas euvesicatoria pv. vesicatoria (strain 85-10) (Xanthomonas campestris pv. vesicatoria) protein is Probable chemoreceptor glutamine deamidase CheD.